The following is a 450-amino-acid chain: uncharacterized protein (450 aa).

Belongs to the herpesviridae BBLF2 family.

This is an uncharacterized protein from Saimiriine herpesvirus 2 (strain 11) (SaHV-2).